The sequence spans 338 residues: Glyceraldehyde-3-phosphate dehydrogenase (338 aa).

NAD(+) contacts are provided by residues Arg12–Ile13, Asp34, and Arg79. D-glyceraldehyde 3-phosphate contacts are provided by residues Ser150–Thr152, Thr181, Thr210–Gly211, and Arg233. Catalysis depends on Cys151, which acts as the Nucleophile. Asn315 serves as a coordination point for NAD(+).

The protein belongs to the glyceraldehyde-3-phosphate dehydrogenase family. Homotetramer.

The protein localises to the cytoplasm. The enzyme catalyses D-glyceraldehyde 3-phosphate + phosphate + NAD(+) = (2R)-3-phospho-glyceroyl phosphate + NADH + H(+). It functions in the pathway carbohydrate degradation; glycolysis; pyruvate from D-glyceraldehyde 3-phosphate: step 1/5. In Hypocrea atroviridis (Trichoderma atroviride), this protein is Glyceraldehyde-3-phosphate dehydrogenase (gpd1).